A 225-amino-acid polypeptide reads, in one-letter code: Small ribosomal subunit protein uS2 (225 aa).

Over residues 1–14 (MAEAKPAPEKEAAA) the composition is skewed to basic and acidic residues. Residues 1–33 (MAEAKPAPEKEAAAKTESVPVETEGEGPSVKEG) are disordered.

It belongs to the universal ribosomal protein uS2 family.

This chain is Small ribosomal subunit protein uS2, found in Methanosarcina barkeri (strain Fusaro / DSM 804).